A 683-amino-acid chain; its full sequence is DNA ligase (683 aa).

NAD(+) contacts are provided by residues 29–33 (DAEFD), 79–80 (SL), and E109. K111 functions as the N6-AMP-lysine intermediate in the catalytic mechanism. 4 residues coordinate NAD(+): R132, E172, K288, and K312. Residues C406, C409, C425, and C431 each contribute to the Zn(2+) site. One can recognise a BRCT domain in the interval 595–683 (SVPRTLAGVT…GPPAEAGEPT (89 aa)).

It belongs to the NAD-dependent DNA ligase family. LigA subfamily. Requires Mg(2+) as cofactor. Mn(2+) is required as a cofactor.

The catalysed reaction is NAD(+) + (deoxyribonucleotide)n-3'-hydroxyl + 5'-phospho-(deoxyribonucleotide)m = (deoxyribonucleotide)n+m + AMP + beta-nicotinamide D-nucleotide.. DNA ligase that catalyzes the formation of phosphodiester linkages between 5'-phosphoryl and 3'-hydroxyl groups in double-stranded DNA using NAD as a coenzyme and as the energy source for the reaction. It is essential for DNA replication and repair of damaged DNA. In Mycobacterium ulcerans (strain Agy99), this protein is DNA ligase.